Reading from the N-terminus, the 212-residue chain is Imidazole glycerol phosphate synthase subunit HisH (212 aa).

The Glutamine amidotransferase type-1 domain occupies 2 to 212; the sequence is KVAVIDYGMG…KNFLAWDGNV (211 aa). Residue cysteine 82 is the Nucleophile of the active site. Active-site residues include histidine 190 and glutamate 192.

As to quaternary structure, heterodimer of HisH and HisF.

It is found in the cytoplasm. The enzyme catalyses 5-[(5-phospho-1-deoxy-D-ribulos-1-ylimino)methylamino]-1-(5-phospho-beta-D-ribosyl)imidazole-4-carboxamide + L-glutamine = D-erythro-1-(imidazol-4-yl)glycerol 3-phosphate + 5-amino-1-(5-phospho-beta-D-ribosyl)imidazole-4-carboxamide + L-glutamate + H(+). It catalyses the reaction L-glutamine + H2O = L-glutamate + NH4(+). The protein operates within amino-acid biosynthesis; L-histidine biosynthesis; L-histidine from 5-phospho-alpha-D-ribose 1-diphosphate: step 5/9. In terms of biological role, IGPS catalyzes the conversion of PRFAR and glutamine to IGP, AICAR and glutamate. The HisH subunit catalyzes the hydrolysis of glutamine to glutamate and ammonia as part of the synthesis of IGP and AICAR. The resulting ammonia molecule is channeled to the active site of HisF. The polypeptide is Imidazole glycerol phosphate synthase subunit HisH (Chromobacterium violaceum (strain ATCC 12472 / DSM 30191 / JCM 1249 / CCUG 213 / NBRC 12614 / NCIMB 9131 / NCTC 9757 / MK)).